The primary structure comprises 491 residues: Cobyric acid synthase (491 aa).

Residues 250–439 (EVTIAVIRLP…LHGIFDNGAW (190 aa)) form the GATase cobBQ-type domain. Cys-331 serves as the catalytic Nucleophile. His-431 is a catalytic residue.

This sequence belongs to the CobB/CobQ family. CobQ subfamily.

It participates in cofactor biosynthesis; adenosylcobalamin biosynthesis. In terms of biological role, catalyzes amidations at positions B, D, E, and G on adenosylcobyrinic A,C-diamide. NH(2) groups are provided by glutamine, and one molecule of ATP is hydrogenolyzed for each amidation. In Synechococcus sp. (strain ATCC 27144 / PCC 6301 / SAUG 1402/1) (Anacystis nidulans), this protein is Cobyric acid synthase.